Consider the following 545-residue polypeptide: Mitogen-activated protein kinase kinase kinase mom-4 (545 aa).

Residues 1–21 (MDTSPHSKPSSSSASQSSHSP) show a composition bias toward low complexity. Residues 1–35 (MDTSPHSKPSSSSASQSSHSPSPAPVTAPRKTRDS) are disordered. Residues 53–308 (NLNSHQLGRG…AECLQYFTAL (256 aa)) enclose the Protein kinase domain. Residues 59 to 67 (LGRGTYGIV) and lysine 86 each bind ATP. Aspartate 178 (proton acceptor) is an active-site residue. The disordered stretch occupies residues 316–444 (NVPLADANTN…PIDDRRDSNE (129 aa)). Composition is skewed to polar residues over residues 352-369 (NGRT…QAVN) and 396-411 (ASSS…QSEA).

It belongs to the protein kinase superfamily. STE Ser/Thr protein kinase family. MAP kinase kinase kinase subfamily. As to quaternary structure, interacts with, and is activated by, tap-1. The cofactor is Mg(2+).

It carries out the reaction L-seryl-[protein] + ATP = O-phospho-L-seryl-[protein] + ADP + H(+). It catalyses the reaction L-threonyl-[protein] + ATP = O-phospho-L-threonyl-[protein] + ADP + H(+). In terms of biological role, part of the Wnt signaling pathway essential for the specification of the mesodermal cell fate in early embryos. Stimulates the wrm-1/lit-1-dependent phosphorylation of pop-1 and plays a role in the initial nuclear accumulation of wrm-1. The sequence is that of Mitogen-activated protein kinase kinase kinase mom-4 from Caenorhabditis briggsae.